Here is a 122-residue protein sequence, read N- to C-terminus: SLLQFRKMIKKMTGKEPVVSYAFYGCYCGSGGRGKPKDATDRCCFVHQCCYEKVTGCDPKWDDYTYSWKDGDIVCGGDDPCKKEVCECDRAAAICFRDNLKTYKKIYMAYPDIFCSSKSEKC.

7 disulfide bridges follow: C26-C115, C28-C44, C43-C95, C49-C122, C50-C88, C57-C81, and C75-C86.

The protein belongs to the phospholipase A2 family. Group II subfamily. Q49 sub-subfamily. As to quaternary structure, monomer. As to expression, expressed by the venom gland.

The protein resides in the secreted. Snake venom phospholipase A2 (PLA2) homolog that shows local myotoxicity, apparent anticoagulant activity, and neurotoxicity. Shows analgesic effect on mice due to a decrease of action potentials and nerve conduction velocity. These effects are caused by inhibition of voltage-gated ion channels (potassium (Kv) and sodium (Nav)). In addition, analgesic effects are antagonized by naloxone, implying the mechanism of action is correlated with opioid receptors (probably indirectly). Does not show detectable PLA2 activity on egg yolk phospholipids. This is Basic phospholipase A2 homolog Gln49-PLA2 from Gloydius ussuriensis (Ussuri mamushi).